The sequence spans 295 residues: MEHQLLCCEVETIRRAYPDANLLNDRVLRAMLKAEETCAPSVSYFKCVQKEVLPSMRKIVATWMLEVCEEQKCEEEVFPLAMNYLDRFLSLEPVKKSRLQLLGATCMFVASKMKETIPLTAEKLCIYTDNSIRPEELLQMELLLVNKLKWNLAAMTPHDFIEHFLSKMPEAEENKQIIRKHAQTFVALCATDVKFISNPPSMVAAGSVVAAVQGLNLRSPNNFLSYYRLTRFLSRVIKCDPDCLRACQEQIEALLESSLRQAQQNMDPKAAEEEEEEEEEVDLACTPTDVRDVDI.

The Cyclin N-terminal domain maps to 28 to 152; sequence LRAMLKAEET…LLVNKLKWNL (125 aa). Positions 262-295 are disordered; that stretch reads AQQNMDPKAAEEEEEEEEEVDLACTPTDVRDVDI. A Glycyl lysine isopeptide (Lys-Gly) (interchain with G-Cter in ubiquitin) cross-link involves residue lysine 269. A compositionally biased stretch (acidic residues) spans 272-282; it reads EEEEEEEEEVD. Threonine 286 carries the post-translational modification Phosphothreonine.

It belongs to the cyclin family. Cyclin D subfamily. In terms of assembly, interacts with either CDK4 or CDK6 protein kinase to form a serine/threonine kinase holoenzyme complex. The cyclin subunit imparts substrate specificity to the complex. Component of the ternary complex CCND1/CDK4/CDKN1B required for nuclear translocation and modulation of CDK4-mediated kinase activity. Interacts directly with CDKN1B. Can form similar complexes with either CDKN1A or CDKN2A. Interacts with UHRF2; the interaction ubiquitinates CCND1 and appears to occur independently of phosphorylation. Interacts with USP2. Interacts (via cyclin N-terminal domain) with INSM1 (via N-terminal region); the interaction competes with the binding of CCND1 to CDK4 during cell cycle progression and inhibits CDK4 activity. Interacts with CDK4; the interaction is prevented with the binding of CCND1 to INSM1 during cell cycle progression. Post-translationally, phosphorylation at Thr-286 by MAP kinases is required for ubiquitination and degradation by the DCX(AMBRA1) complex. It also plays an essential role for recognition by the FBXO31 component of SCF (SKP1-cullin-F-box) protein ligase complex following DNA damage. Ubiquitinated at Lys-269 by the DCX(AMBRA1) complex during the transition from G1 to S cell phase, leading to its degradation: ubiquitination is dependent on Thr-286 phosphorylation. The DCX(AMBRA1) complex represents the major regulator of CCND1 stability during the G1/S transition. Also ubiquitinated by the SCF(FBXO4) and Cul7-RING(FBXW8) ubiquitin-protein ligase complexes. Following DNA damage it is ubiquitinated by the SCF(FBXO31) protein ligase complex. SCF(FBXO31) ubiquitination is dependent on Thr-286 phosphorylation. Ubiquitinated also by UHRF2 apparently in a phosphorylation-independent manner. Ubiquitination leads to its degradation and G1 arrest. Deubiquitinated by USP2; leading to its stabilization.

It localises to the nucleus. It is found in the cytoplasm. The protein localises to the nucleus membrane. Functionally, regulatory component of the cyclin D1-CDK4 (DC) complex that phosphorylates and inhibits members of the retinoblastoma (RB) protein family including RB1 and regulates the cell-cycle during G(1)/S transition. Phosphorylation of RB1 allows dissociation of the transcription factor E2F from the RB/E2F complex and the subsequent transcription of E2F target genes which are responsible for the progression through the G(1) phase. Hypophosphorylates RB1 in early G(1) phase. Cyclin D-CDK4 complexes are major integrators of various mitogenenic and antimitogenic signals. Also a substrate for SMAD3, phosphorylating SMAD3 in a cell-cycle-dependent manner and repressing its transcriptional activity. Component of the ternary complex, cyclin D1/CDK4/CDKN1B, required for nuclear translocation and activity of the cyclin D-CDK4 complex. Exhibits transcriptional corepressor activity with INSM1 on the NEUROD1 and INS promoters in a cell cycle-independent manner. This chain is G1/S-specific cyclin-D1, found in Homo sapiens (Human).